Reading from the N-terminus, the 166-residue chain is NAD(P)H-quinone oxidoreductase subunit I, chloroplastic (166 aa).

4Fe-4S ferredoxin-type domains are found at residues 55–84 (GRIHFEFDKCIACEVCVRVCPMDLPVVDWK) and 95–124 (LNYSIDFGICIFCGNCVEYCPTNCLSMTEE). 8 residues coordinate [4Fe-4S] cluster: Cys64, Cys67, Cys70, Cys74, Cys104, Cys107, Cys110, and Cys114.

The protein belongs to the complex I 23 kDa subunit family. In terms of assembly, NDH is composed of at least 16 different subunits, 5 of which are encoded in the nucleus. It depends on [4Fe-4S] cluster as a cofactor.

It is found in the plastid. Its subcellular location is the chloroplast thylakoid membrane. It carries out the reaction a plastoquinone + NADH + (n+1) H(+)(in) = a plastoquinol + NAD(+) + n H(+)(out). The catalysed reaction is a plastoquinone + NADPH + (n+1) H(+)(in) = a plastoquinol + NADP(+) + n H(+)(out). Its function is as follows. NDH shuttles electrons from NAD(P)H:plastoquinone, via FMN and iron-sulfur (Fe-S) centers, to quinones in the photosynthetic chain and possibly in a chloroplast respiratory chain. The immediate electron acceptor for the enzyme in this species is believed to be plastoquinone. Couples the redox reaction to proton translocation, and thus conserves the redox energy in a proton gradient. The sequence is that of NAD(P)H-quinone oxidoreductase subunit I, chloroplastic from Steiractinia sodiroi.